The primary structure comprises 90 residues: Small ribosomal subunit protein bS16 (90 aa).

It belongs to the bacterial ribosomal protein bS16 family.

The polypeptide is Small ribosomal subunit protein bS16 (Lactobacillus helveticus (strain DPC 4571)).